We begin with the raw amino-acid sequence, 383 residues long: U-box domain-containing protein 63 (383 aa).

The interval 166–186 (PDGNVSNSHRNTQQKRDFASV) is disordered. One can recognise a U-box domain in the interval 201–273 (SLKAILSDPV…HAFRQEEDSD (73 aa)).

The enzyme catalyses S-ubiquitinyl-[E2 ubiquitin-conjugating enzyme]-L-cysteine + [acceptor protein]-L-lysine = [E2 ubiquitin-conjugating enzyme]-L-cysteine + N(6)-ubiquitinyl-[acceptor protein]-L-lysine.. Its pathway is protein modification; protein ubiquitination. Its function is as follows. Functions as an E3 ubiquitin ligase. The polypeptide is U-box domain-containing protein 63 (PUB63) (Arabidopsis thaliana (Mouse-ear cress)).